A 360-amino-acid chain; its full sequence is MLVYLAEYLTQFYSGFNVFSYVTFRAILGLMTALMFSLWWGPKMIARLQLMQIGQVVRNDGPESHFSKRGTPTMGGLLILAGVFISVLLWGDLDSRYVWVVLFVLGSFGLIGFIDDYRKVVRKDTKGLIARWKYLLQSLAALLIAVYLYASAQSPGETQLVVPFFKDVMPQLGGFFIVLVYFTIVGSSNAVNLTDGLDGLAIMPTVMVAAAFALIAYLSGHVQFASYLHLPYLPGAGELVIVCTAIVGAGLGFLWFNTYPAQVFMGDVGSLSLGAALGTIAVLVRQEILLVIMGGVFVMETVSVILQVGSYKLRGQRIFRMAPIHHHYELKGWPEPRVIVRFWIISLFLVLLGLATLKLR.

Helical transmembrane passes span 26–46, 73–93, 97–117, 132–152, 168–188, 199–219, 236–256, 263–283, 288–308, and 338–358; these read AILGLMTALMFSLWWGPKMIA, TMGGLLILAGVFISVLLWGDL, YVWVVLFVLGSFGLIGFIDDY, WKYLLQSLAALLIAVYLYASA, VMPQLGGFFIVLVYFTIVGSS, GLAIMPTVMVAAAFALIAYLS, AGELVIVCTAIVGAGLGFLWF, VFMGDVGSLSLGAALGTIAVL, ILLVIMGGVFVMETVSVILQV, and VIVRFWIISLFLVLLGLATLK.

The protein belongs to the glycosyltransferase 4 family. MraY subfamily. It depends on Mg(2+) as a cofactor.

The protein resides in the cell inner membrane. It catalyses the reaction UDP-N-acetyl-alpha-D-muramoyl-L-alanyl-gamma-D-glutamyl-meso-2,6-diaminopimeloyl-D-alanyl-D-alanine + di-trans,octa-cis-undecaprenyl phosphate = di-trans,octa-cis-undecaprenyl diphospho-N-acetyl-alpha-D-muramoyl-L-alanyl-D-glutamyl-meso-2,6-diaminopimeloyl-D-alanyl-D-alanine + UMP. It functions in the pathway cell wall biogenesis; peptidoglycan biosynthesis. Its function is as follows. Catalyzes the initial step of the lipid cycle reactions in the biosynthesis of the cell wall peptidoglycan: transfers peptidoglycan precursor phospho-MurNAc-pentapeptide from UDP-MurNAc-pentapeptide onto the lipid carrier undecaprenyl phosphate, yielding undecaprenyl-pyrophosphoryl-MurNAc-pentapeptide, known as lipid I. The chain is Phospho-N-acetylmuramoyl-pentapeptide-transferase from Shewanella halifaxensis (strain HAW-EB4).